The primary structure comprises 546 residues: Probable protein kinase UbiB (546 aa).

The Protein kinase domain maps to 123–501; that stretch reads DFDETPLASA…SRRQGQARYL (379 aa). Residues 129 to 137 and K152 contribute to the ATP site; that span reads LASASIAQV. The active-site Proton acceptor is D287. Helical transmembrane passes span 498–517 and 522–541; these read ARYL…FLLT and IEWG…LGWL.

Belongs to the ABC1 family. UbiB subfamily.

The protein resides in the cell inner membrane. It functions in the pathway cofactor biosynthesis; ubiquinone biosynthesis [regulation]. Functionally, is probably a protein kinase regulator of UbiI activity which is involved in aerobic coenzyme Q (ubiquinone) biosynthesis. This is Probable protein kinase UbiB from Aeromonas hydrophila subsp. hydrophila (strain ATCC 7966 / DSM 30187 / BCRC 13018 / CCUG 14551 / JCM 1027 / KCTC 2358 / NCIMB 9240 / NCTC 8049).